The following is a 183-amino-acid chain: Ribosome rescue factor SmrB (183 aa).

The region spanning 98–173 (LDLHGLTQLQ…GDAALLVLIE (76 aa)) is the Smr domain.

It belongs to the SmrB family. Associates with collided ribosomes, but not with correctly translating polysomes.

Its function is as follows. Acts as a ribosome collision sensor. Detects stalled/collided disomes (pairs of ribosomes where the leading ribosome is stalled and a second ribosome has collided with it) and endonucleolytically cleaves mRNA at the 5' boundary of the stalled ribosome. Stalled/collided disomes form a new interface (primarily via the 30S subunits) that binds SmrB. Cleaved mRNA becomes available for tmRNA ligation, leading to ribosomal subunit dissociation and rescue of stalled ribosomes. The chain is Ribosome rescue factor SmrB from Escherichia coli O7:K1 (strain IAI39 / ExPEC).